The chain runs to 458 residues: NADH-ubiquinone oxidoreductase chain 4 (458 aa).

12 helical membrane-spanning segments follow: residues 21 to 43, 58 to 78, 93 to 112, 116 to 138, 145 to 165, 196 to 216, 224 to 244, 257 to 277, 285 to 305, 309 to 329, 341 to 361, and 379 to 399; these read ASLWTNTTTYSLLIATISLQWLN, IDQISAPLLVLSCWLLPLMLL, RTFIVTLTTIQPFIILAFSA, TLFYISFEATLIPTLILITRWGN, AGIYLLFYTLISSLPLLVTIL, GLALLMAFMVKAPLYGLHLWL, PIAGSMLLAALLLKLGGYGIM, LSYPFLALALWGALMTSSICL, LIAYSSVSHMGLVIAASMIQT, FSGAMILMISHGLTSSMLFCL, ILLLTRGLQPLLPLMSVWWLL, and LTIMIALFNWSTPTIILTGLA.

Belongs to the complex I subunit 4 family.

The protein localises to the mitochondrion membrane. It carries out the reaction a ubiquinone + NADH + 5 H(+)(in) = a ubiquinol + NAD(+) + 4 H(+)(out). Functionally, core subunit of the mitochondrial membrane respiratory chain NADH dehydrogenase (Complex I) that is believed to belong to the minimal assembly required for catalysis. Complex I functions in the transfer of electrons from NADH to the respiratory chain. The immediate electron acceptor for the enzyme is believed to be ubiquinone. The protein is NADH-ubiquinone oxidoreductase chain 4 (MT-ND4) of Struthio camelus (Common ostrich).